The following is a 168-amino-acid chain: Transcriptional repressor NrdR (168 aa).

Positions 1–21 (MQCPACRHTDSRVLESRSSES) are disordered. A zinc finger lies at 3–34 (CPACRHTDSRVLESRSSESGRSVRRRRECLSC). The segment covering 7 to 20 (RHTDSRVLESRSSE) has biased composition (basic and acidic residues). In terms of domain architecture, ATP-cone spans 49-139 (ISVIKRNGDR…VYRQFRGVRD (91 aa)).

It belongs to the NrdR family. The cofactor is Zn(2+).

Negatively regulates transcription of bacterial ribonucleotide reductase nrd genes and operons by binding to NrdR-boxes. The chain is Transcriptional repressor NrdR from Synechococcus elongatus (strain ATCC 33912 / PCC 7942 / FACHB-805) (Anacystis nidulans R2).